A 468-amino-acid polypeptide reads, in one-letter code: Tripartite motif-containing protein 75 (468 aa).

Residues 16–57 (CSICLDYLSDPVTIECGHNFCRSCIQQSWLDLQELFPCPVCR) form an RING-type zinc finger. A B box-type zinc finger spans residues 92–133 (EETTLCEKHNQPLSVFCKEDLMVLCPLCTQPPDHQGHHVRPI). Zn(2+)-binding residues include C97, H100, C119, and H125. Positions 170 to 222 (LELREMVENQRQELSSEFEHLNQFLDREQQAVLSRLAEEEKDNQQKLSANITA) form a coiled coil. The B30.2/SPRY domain occupies 276–468 (CSFPPQYSAL…LRICTGTVCE (193 aa)).

The protein belongs to the TRIM/RBCC family.

The protein localises to the cytoplasm. It is found in the cytoskeleton. It localises to the spindle. In terms of biological role, may play a role in female meiosis. In Homo sapiens (Human), this protein is Tripartite motif-containing protein 75.